A 313-amino-acid chain; its full sequence is Ribosomal RNA small subunit methyltransferase H (313 aa).

S-adenosyl-L-methionine is bound by residues glycine 48–histidine 50, aspartate 68, phenylalanine 102, aspartate 120, and glutamine 127. The interval threonine 290 to lysine 313 is disordered. Basic residues predominate over residues arginine 301–lysine 313.

Belongs to the methyltransferase superfamily. RsmH family.

The protein resides in the cytoplasm. It carries out the reaction cytidine(1402) in 16S rRNA + S-adenosyl-L-methionine = N(4)-methylcytidine(1402) in 16S rRNA + S-adenosyl-L-homocysteine + H(+). Specifically methylates the N4 position of cytidine in position 1402 (C1402) of 16S rRNA. This chain is Ribosomal RNA small subunit methyltransferase H, found in Koribacter versatilis (strain Ellin345).